The following is a 261-amino-acid chain: Shikimate dehydrogenase (NADP(+)) (261 aa).

Shikimate contacts are provided by residues 13-15 and Thr-60; that span reads SLS. Catalysis depends on Lys-64, which acts as the Proton acceptor. Residue Glu-76 participates in NADP(+) binding. Positions 85 and 100 each coordinate shikimate. NADP(+) contacts are provided by residues 122–126, 143–148, and Ile-203; these read GAGGA and NRTVER. Residue Tyr-205 participates in shikimate binding. Gly-226 serves as a coordination point for NADP(+).

Belongs to the shikimate dehydrogenase family. As to quaternary structure, homodimer.

The enzyme catalyses shikimate + NADP(+) = 3-dehydroshikimate + NADPH + H(+). Its pathway is metabolic intermediate biosynthesis; chorismate biosynthesis; chorismate from D-erythrose 4-phosphate and phosphoenolpyruvate: step 4/7. Functionally, involved in the biosynthesis of the chorismate, which leads to the biosynthesis of aromatic amino acids. Catalyzes the reversible NADPH linked reduction of 3-dehydroshikimate (DHSA) to yield shikimate (SA). The sequence is that of Shikimate dehydrogenase (NADP(+)) from Exiguobacterium sp. (strain ATCC BAA-1283 / AT1b).